Reading from the N-terminus, the 448-residue chain is UDP-N-acetylmuramoylalanine--D-glutamate ligase (448 aa).

112–118 (GSNAKST) lines the ATP pocket.

It belongs to the MurCDEF family.

The protein resides in the cytoplasm. It carries out the reaction UDP-N-acetyl-alpha-D-muramoyl-L-alanine + D-glutamate + ATP = UDP-N-acetyl-alpha-D-muramoyl-L-alanyl-D-glutamate + ADP + phosphate + H(+). Its pathway is cell wall biogenesis; peptidoglycan biosynthesis. Functionally, cell wall formation. Catalyzes the addition of glutamate to the nucleotide precursor UDP-N-acetylmuramoyl-L-alanine (UMA). This is UDP-N-acetylmuramoylalanine--D-glutamate ligase from Acinetobacter baumannii (strain ATCC 17978 / DSM 105126 / CIP 53.77 / LMG 1025 / NCDC KC755 / 5377).